The sequence spans 392 residues: Tyrosine--tRNA ligase (392 aa).

Positions 41–50 (PTAPDLHLGH) match the 'HIGH' region motif. Residues 225-229 (KMSKS) carry the 'KMSKS' region motif. Lys228 contributes to the ATP binding site. The 61-residue stretch at 330–390 (LRAVDFLVKI…VGKKKFYRVV (61 aa)) folds into the S4 RNA-binding domain.

This sequence belongs to the class-I aminoacyl-tRNA synthetase family. TyrS type 2 subfamily. Homodimer.

The protein localises to the cytoplasm. The enzyme catalyses tRNA(Tyr) + L-tyrosine + ATP = L-tyrosyl-tRNA(Tyr) + AMP + diphosphate + H(+). Functionally, catalyzes the attachment of tyrosine to tRNA(Tyr) in a two-step reaction: tyrosine is first activated by ATP to form Tyr-AMP and then transferred to the acceptor end of tRNA(Tyr). In Aquifex aeolicus (strain VF5), this protein is Tyrosine--tRNA ligase.